The primary structure comprises 145 residues: Bacilliredoxin BLi02578/BL01507 (145 aa).

The protein belongs to the bacilliredoxin family.

This Bacillus licheniformis (strain ATCC 14580 / DSM 13 / JCM 2505 / CCUG 7422 / NBRC 12200 / NCIMB 9375 / NCTC 10341 / NRRL NRS-1264 / Gibson 46) protein is Bacilliredoxin BLi02578/BL01507.